A 493-amino-acid polypeptide reads, in one-letter code: MPESRTVALVTLGCARNEVDSEELAGRLEADGWKLVDDAEEADVAVVNTCGFVEAAKKDSVDALLEANDLKGHGRTQAVVAVGCMAERYGKELADALPEADGVLGFDDYADISDRLQTILNGGIHAAHTPRDRRKLLPISPAERQEAGAAVALPGHGPTDLPEGVAPASGPRAPLRRRLDGSPVASVKLASGCDRRCSFCAIPSFRGSFISRRPSDVLNETRWLAEQGVKEIMLVSENNTSYGKDLGDIRLLESLLPNLAEVDGIERVRVSYLQPAEMRPGLIDVLTSTEKVAPYFDLSFQHSAPNVLRAMRRFGDTDRFLELLDTIRSKAPEAGVRSNFIVGFPGESEADLAELERFLNHARLDAIGVFGYSDEEGTEAATYGDKLDEDVVAERLARVSRLAEELVSQRADERVGATVRVLVESVDPAGEGDGVRGRAEHQAPETDGQVLLTSGAGLSVGRMVDAKVVGTEGVDLVAEPLLGSPEWSEEAGR.

Positions 5–121 (RTVALVTLGC…ISDRLQTILN (117 aa)) constitute an MTTase N-terminal domain. [4Fe-4S] cluster-binding residues include Cys-14, Cys-50, and Cys-84. A disordered region spans residues 153 to 177 (LPGHGPTDLPEGVAPASGPRAPLRR). One can recognise a Radical SAM core domain in the interval 179-410 (LDGSPVASVK…RLAEELVSQR (232 aa)). Cys-193, Cys-197, and Cys-200 together coordinate [4Fe-4S] cluster. The 71-residue stretch at 412–482 (DERVGATVRV…GVDLVAEPLL (71 aa)) folds into the TRAM domain.

This sequence belongs to the methylthiotransferase family. RimO subfamily. It depends on [4Fe-4S] cluster as a cofactor.

It is found in the cytoplasm. The enzyme catalyses L-aspartate(89)-[ribosomal protein uS12]-hydrogen + (sulfur carrier)-SH + AH2 + 2 S-adenosyl-L-methionine = 3-methylsulfanyl-L-aspartate(89)-[ribosomal protein uS12]-hydrogen + (sulfur carrier)-H + 5'-deoxyadenosine + L-methionine + A + S-adenosyl-L-homocysteine + 2 H(+). In terms of biological role, catalyzes the methylthiolation of an aspartic acid residue of ribosomal protein uS12. The chain is Ribosomal protein uS12 methylthiotransferase RimO from Streptomyces coelicolor (strain ATCC BAA-471 / A3(2) / M145).